A 95-amino-acid polypeptide reads, in one-letter code: Co-chaperonin GroES (95 aa).

This sequence belongs to the GroES chaperonin family. As to quaternary structure, heptamer of 7 subunits arranged in a ring. Interacts with the chaperonin GroEL.

It is found in the cytoplasm. In terms of biological role, together with the chaperonin GroEL, plays an essential role in assisting protein folding. The GroEL-GroES system forms a nano-cage that allows encapsulation of the non-native substrate proteins and provides a physical environment optimized to promote and accelerate protein folding. GroES binds to the apical surface of the GroEL ring, thereby capping the opening of the GroEL channel. The polypeptide is Co-chaperonin GroES (Bordetella avium (strain 197N)).